We begin with the raw amino-acid sequence, 580 residues long: M-phase inducer phosphatase 2 (580 aa).

Residues Met-1–Gln-24 are disordered. Residue Ser-42 is modified to Phosphoserine. Residues Ser-89–Ser-107 are compositionally biased toward low complexity. Disordered stretches follow at residues Ser-89 to Ser-117 and Asn-165 to Gly-196. The residue at position 169 (Ser-169) is a Phosphoserine; by MELK. Ser-249 carries the phosphoserine modification. The residue at position 323 (Ser-323) is a Phosphoserine; by MELK and MAPK14. The disordered stretch occupies residues Pro-331–Val-370. Over residues Lys-334 to Thr-344 the composition is skewed to basic and acidic residues. Position 353 is a phosphoserine; by AURKA (Ser-353). A Phosphoserine; by BRSK1 and MAPK14 modification is found at Ser-375. In terms of domain architecture, Rhodanese spans Ile-431 to Glu-538. Ser-470 carries the post-translational modification Phosphoserine. Residue Cys-487 is part of the active site. Position 563 is a phosphoserine (Ser-563).

The protein belongs to the MPI phosphatase family. As to quaternary structure, interacts with MAPK14 and 14-3-3 proteins. Phosphorylated by BRSK1 in vitro. Phosphorylated by CHEK1, which inhibits the activity of this protein. Phosphorylation at Ser-353 by AURKA might locally participate in the control of the onset of mitosis. Phosphorylation by MELK at Ser-169 promotes localization to the centrosome and the spindle poles during mitosis. Phosphorylation at Ser-323 and Ser-375 by MAPK14 is required for binding to 14-3-3 proteins.

The protein resides in the cytoplasm. Its subcellular location is the cytoskeleton. It localises to the microtubule organizing center. The protein localises to the centrosome. It is found in the spindle pole. It carries out the reaction O-phospho-L-tyrosyl-[protein] + H2O = L-tyrosyl-[protein] + phosphate. Stimulated by B-type cyclins. Its function is as follows. Tyrosine protein phosphatase which functions as a dosage-dependent inducer of mitotic progression. Directly dephosphorylates CDK1 and stimulates its kinase activity. Required for G2/M phases of the cell cycle progression and abscission during cytokinesis in a ECT2-dependent manner. The three isoforms seem to have a different level of activity. The chain is M-phase inducer phosphatase 2 (CDC25B) from Homo sapiens (Human).